A 1281-amino-acid chain; its full sequence is Dynactin subunit 1 (1281 aa).

The tract at residues 1–26 (MAQSRRHMSSRTPSGSRMSTEASARP) is disordered. The span at 10-22 (SRTPSGSRMSTEA) shows a compositional bias: polar residues. One can recognise a CAP-Gly domain in the interval 48-90 (GATLFATGKWVGVILDEAKGKNDGTVQGRKYFTCDEGHGIFVR). Residues 100–221 (GADTTSPETP…SPSKEEEGLR (122 aa)) are disordered. Over residues 102–114 (DTTSPETPDSSAS) the composition is skewed to polar residues. Phosphothreonine occurs at positions 108, 145, 146, and 147. Over residues 129-152 (SKLRGLKPKKAPTARKTTTRRPKP) the composition is skewed to basic residues. Residues 161 to 205 (AGPSSSLGPSGSASAGELSSSEPSTPAQTPLAAPIIPTPALTSPG) show a composition bias toward low complexity. A Phosphoserine; by PLK1 modification is found at Ser179. Ser212 bears the Phosphoserine; by CDK1 mark. Coiled-coil stretches lie at residues 214 to 547 (SKEE…RQQQ), 943 to 1049 (LKLE…EGLR), and 1185 to 1214 (SAQL…KETV). The interaction with HPS6 stretch occupies residues 911-1281 (EYDAERPPSK…LHQLHSRLIS (371 aa)).

This sequence belongs to the dynactin 150 kDa subunit family. As to quaternary structure, monomer and homodimer. Subunit of dynactin, a multiprotein complex part of a tripartite complex with dynein and a adapter, such as BICDL1, BICD2 or HOOK3. The dynactin complex is built around ACTR1A/ACTB filament and consists of an actin-related filament composed of a shoulder domain, a pointed end and a barbed end. Its length is defined by its flexible shoulder domain. The soulder is composed of 2 DCTN1 subunits, 4 DCTN2 and 2 DCTN3. DCTN1/p150(glued) binds directly to microtubules and to cytoplasmic dynein. The 4 DCNT2 (via N-terminus) bind the ACTR1A filament and act as molecular rulers to determine the length. The pointed end is important for binding dynein-dynactin cargo adapters. Consists of 4 subunits: ACTR10, DCNT4, DCTN5 and DCTN6. The barbed end is composed of a CAPZA1:CAPZB heterodimers, which binds ACTR1A/ACTB filament and dynactin and stabilizes dynactin. Interacts with the C-terminus of MAPRE1, MAPRE2 and MAPRE3. Interacts with FBXL5. Interacts with ECPAS. Interacts with CLIP1. Interacts with CLN3 and DYNAP. Interacts with MISP; this interaction regulates its distribution at the cell cortex. Interacts with CEP131. Interacts with CEP126. Interacts with dynein intermediate chain and dynein heavy chain. Interacts with PLK1 (via POLO-box domain). Interacts with TBCB and PARD6A. Binds preferentially to tyrosinated microtubules than to detyrosinated microtubules. Interacts with KIF3A. Interacts with HPS6. Interacts with SNX6. Interacts with BICD2. Interacts with DST (isoform 1). Identified in a complex with MREG and RILP. Interacts with BCCIP. Interacts with DCDC1. Interacts with AKNA. Interacts with DYNC1I2. Interacts with RUFY3 and RUFY4. Ubiquitinated by a SCF complex containing FBXL5, leading to its degradation by the proteasome. Post-translationally, phosphorylation by SLK at Thr-145, Thr-146 and Thr-147 targets DCTN1 to the centrosome. It is uncertain if SLK phosphorylates all three threonines or one or two of them. PLK1-mediated phosphorylation at Ser-179 is essential for its localization in the nuclear envelope and promotes its dissociation from microtubules during early mitosis and positively regulates nuclear envelope breakdown during prophase.

Its subcellular location is the cytoplasm. It is found in the cytoskeleton. It localises to the microtubule organizing center. The protein localises to the centrosome. The protein resides in the centriole. Its subcellular location is the spindle. It is found in the nucleus envelope. It localises to the cell cortex. In terms of biological role, part of the dynactin complex that activates the molecular motor dynein for ultra-processive transport along microtubules. Plays a key role in dynein-mediated retrograde transport of vesicles and organelles along microtubules by recruiting and tethering dynein to microtubules. Binds to both dynein and microtubules providing a link between specific cargos, microtubules and dynein. Essential for targeting dynein to microtubule plus ends, recruiting dynein to membranous cargos and enhancing dynein processivity (the ability to move along a microtubule for a long distance without falling off the track). Can also act as a brake to slow the dynein motor during motility along the microtubule. Can regulate microtubule stability by promoting microtubule formation, nucleation and polymerization and by inhibiting microtubule catastrophe in neurons. Inhibits microtubule catastrophe by binding both to microtubules and to tubulin, leading to enhanced microtubule stability along the axon. Plays a role in metaphase spindle orientation. Plays a role in centriole cohesion and subdistal appendage organization and function. Its recruitment to the centriole in a KIF3A-dependent manner is essential for the maintenance of centriole cohesion and the formation of subdistal appendage. Also required for microtubule anchoring at the mother centriole. Plays a role in primary cilia formation. This chain is Dynactin subunit 1 (Dctn1), found in Mus musculus (Mouse).